The chain runs to 387 residues: MTVLKMSDLDLQGKRVLIREDLNVPVKDGVVTSDARILASLPTIKLALEKGAAVMVCSHLGRPTEGEFSAENSLKPVADYLSKALGREVPLVADYLGGVDVKAGDIVLFENVRFNKGEKKNADELAQQYAALCDVFVMDAFGTAHRAEGSTHGVAKFAKVAAAGPLLAAELDALGKALGAPAKPMAAIVAGSKVSTKLDVLNSLSQICDQLIVGGGIANTFLAAAGHPVGKSLYEPDLLDTARAIAAKVSVPLPVDVVVAKEFAESAEATVKLIADVAADDMILDIGPQTAANFAELLKSSKTILWNGPVGVFEFDQFGNGTKVLAEAIAESAAFSIAGGGDTLAAIDKYGVAEKISYISTGGGAFLEFVEGKVLPAVEVLESRAKA.

Substrate-binding positions include 21-23 (DLN), R36, 59-62 (HLGR), R113, and R146. ATP-binding positions include K197, E314, and 340-343 (GGDT).

This sequence belongs to the phosphoglycerate kinase family. As to quaternary structure, monomer.

It localises to the cytoplasm. The enzyme catalyses (2R)-3-phosphoglycerate + ATP = (2R)-3-phospho-glyceroyl phosphate + ADP. It participates in carbohydrate degradation; glycolysis; pyruvate from D-glyceraldehyde 3-phosphate: step 2/5. This is Phosphoglycerate kinase from Pseudomonas fluorescens (strain Pf0-1).